A 397-amino-acid chain; its full sequence is Elongation factor Tu (397 aa).

The tr-type G domain occupies 10 to 207 (KPHVNVGTIG…TLDAYIPEPE (198 aa)). Positions 19–26 (GHVDHGKT) are G1. 19–26 (GHVDHGKT) provides a ligand contact to GTP. Threonine 26 is a Mg(2+) binding site. Positions 60–64 (GITIA) are G2. Residues 81-84 (DCPG) are G3. Residues 81–85 (DCPGH) and 136–139 (NKAD) contribute to the GTP site. The tract at residues 136–139 (NKAD) is G4. The G5 stretch occupies residues 174 to 176 (SAL).

The protein belongs to the TRAFAC class translation factor GTPase superfamily. Classic translation factor GTPase family. EF-Tu/EF-1A subfamily. As to quaternary structure, monomer.

The protein localises to the cytoplasm. The enzyme catalyses GTP + H2O = GDP + phosphate + H(+). GTP hydrolase that promotes the GTP-dependent binding of aminoacyl-tRNA to the A-site of ribosomes during protein biosynthesis. The chain is Elongation factor Tu from Hahella chejuensis (strain KCTC 2396).